The sequence spans 218 residues: MDFANERRAMIDLLVQRGIRDRRVLDAMAQVPRHAFVPENERSFAYSDQALPIGEGQTISQPYMVALMVEALQLAPTDRVLEVGAGSGYAAAVLSRIVAKVHTVECREALAERAVALIQALGYTNITVHIGDGTQGLPDYAPFDAILVSAASPWVPAPLREQLASSGRLVIPVGGRQAQILLRLRREGDTLRTERLCDVRFVPLIGGHAWTAERYPER.

Ser60 is an active-site residue.

The protein belongs to the methyltransferase superfamily. L-isoaspartyl/D-aspartyl protein methyltransferase family.

It localises to the cytoplasm. It catalyses the reaction [protein]-L-isoaspartate + S-adenosyl-L-methionine = [protein]-L-isoaspartate alpha-methyl ester + S-adenosyl-L-homocysteine. In terms of biological role, catalyzes the methyl esterification of L-isoaspartyl residues in peptides and proteins that result from spontaneous decomposition of normal L-aspartyl and L-asparaginyl residues. It plays a role in the repair and/or degradation of damaged proteins. The protein is Protein-L-isoaspartate O-methyltransferase of Roseiflexus sp. (strain RS-1).